We begin with the raw amino-acid sequence, 226 residues long: Beta-phosphoglucomutase (226 aa).

The Nucleophile role is filled by aspartate 7. Mg(2+)-binding residues include aspartate 7 and aspartate 9. Aspartate 7 is subject to 4-aspartylphosphate. Aspartate 9 acts as the Proton donor/acceptor in catalysis. The beta-D-glucose 6-phosphate site is built by aspartate 9, glycine 44, isoleucine 45, arginine 47, serine 116, arginine 117, and asparagine 118. A Mg(2+)-binding site is contributed by aspartate 170.

This sequence belongs to the HAD-like hydrolase superfamily. CbbY/CbbZ/Gph/YieH family. Homodimer. It depends on Mg(2+) as a cofactor. Autophosphorylated.

The protein resides in the cytoplasm. It carries out the reaction beta-D-glucose 1-phosphate = beta-D-glucose 6-phosphate. In terms of biological role, catalyzes the interconversion of D-glucose 1-phosphate (G1P) and D-glucose 6-phosphate (G6P), forming beta-D-glucose 1,6-(bis)phosphate (beta-G16P) as an intermediate. The polypeptide is Beta-phosphoglucomutase (yvdM) (Bacillus subtilis (strain 168)).